The following is an 833-amino-acid chain: Leucine--tRNA ligase (833 aa).

Positions 41 to 52 (PYPSGAGLHVGH) match the 'HIGH' region motif. Positions 610–614 (KMSKS) match the 'KMSKS' region motif. K613 serves as a coordination point for ATP.

The protein belongs to the class-I aminoacyl-tRNA synthetase family.

It is found in the cytoplasm. The catalysed reaction is tRNA(Leu) + L-leucine + ATP = L-leucyl-tRNA(Leu) + AMP + diphosphate. The sequence is that of Leucine--tRNA ligase from Streptococcus equi subsp. zooepidemicus (strain H70).